Consider the following 193-residue polypeptide: Ion-translocating oxidoreductase complex subunit A (193 aa).

The next 6 helical transmembrane spans lie at 5–25, 39–59, 63–83, 102–122, 134–154, and 171–191; these read LLLL…FLGL, IGMG…SYLM, ILIP…VIAV, LLGI…VALL, IIYG…FAAM, and SIAM…TGLI.

It belongs to the NqrDE/RnfAE family. The complex is composed of six subunits: RnfA, RnfB, RnfC, RnfD, RnfE and RnfG.

The protein localises to the cell inner membrane. Functionally, part of a membrane-bound complex that couples electron transfer with translocation of ions across the membrane. This chain is Ion-translocating oxidoreductase complex subunit A, found in Aeromonas hydrophila subsp. hydrophila (strain ATCC 7966 / DSM 30187 / BCRC 13018 / CCUG 14551 / JCM 1027 / KCTC 2358 / NCIMB 9240 / NCTC 8049).